The chain runs to 67 residues: Brevinin-1CDYc (67 aa).

The N-terminal stretch at 1–22 (MFTLKKSLLLIFFLGTINLSLC) is a signal peptide. A propeptide spanning residues 23–45 (EEERNADEEERRDDPEERDVEVE) is cleaved from the precursor. Cysteine 61 and cysteine 67 are joined by a disulfide.

Belongs to the frog skin active peptide (FSAP) family. Brevinin subfamily. Expressed by the skin glands.

The protein resides in the secreted. Antimicrobial peptide. The chain is Brevinin-1CDYc from Rana huanrensis (Huanren frog).